Consider the following 300-residue polypeptide: Glycine--tRNA ligase alpha subunit (300 aa).

The protein belongs to the class-II aminoacyl-tRNA synthetase family. As to quaternary structure, tetramer of two alpha and two beta subunits.

It is found in the cytoplasm. It catalyses the reaction tRNA(Gly) + glycine + ATP = glycyl-tRNA(Gly) + AMP + diphosphate. In Buchnera aphidicola subsp. Baizongia pistaciae (strain Bp), this protein is Glycine--tRNA ligase alpha subunit (glyQ).